A 169-amino-acid polypeptide reads, in one-letter code: Regulator of G-protein signaling rgs-2 (169 aa).

Positions 39–158 (GWSQSFENLM…FLASNIYKTV (120 aa)) constitute an RGS domain.

Post-translationally, may be phosphorylated and activated by egl-4. In terms of tissue distribution, expressed in a subset of neurons including ventral cord and head- and tail-ganglia neurons. Also expressed in non-neuronal cells including pharyngeal and uterine muscles.

Weakly inhibits G protein signaling in nervous system, interacting preferentially with the G(O) subfamily member goa-1. In vitro, it acts as a GTPase activator of goa-1. Rgs-1 and rgs-2 redundantly adjust signaling when worms are fed to allow rapid induction of egg-laying behavior. Modulates chemotaxis responses by regulating negatively the sensitivity to quinine in ASH sensory neurons. The polypeptide is Regulator of G-protein signaling rgs-2 (rgs-2) (Caenorhabditis elegans).